The primary structure comprises 135 residues: Large ribosomal subunit protein uL16c (135 aa).

The protein belongs to the universal ribosomal protein uL16 family. Part of the 50S ribosomal subunit.

The protein resides in the plastid. It localises to the chloroplast. The sequence is that of Large ribosomal subunit protein uL16c from Oenothera argillicola (Appalachian evening primrose).